A 249-amino-acid polypeptide reads, in one-letter code: Mannose-binding protein C (249 aa).

The signal sequence occupies residues 1 to 20; the sequence is MSLFTSLPFLLLTAVTASCA. The 59-residue stretch at 43–101 folds into the Collagen-like domain; sequence GINGIPGKDGRDGAKGEKGEPGQGLRGSQGPPGKMGPQGTPGIPGIPGPIGQKGDPGEN. Residues 43–103 are disordered; it reads GINGIPGKDG…QKGDPGENMG (61 aa). 4-hydroxyproline is present on proline 48. Residues 50–62 are compositionally biased toward basic and acidic residues; that stretch reads KDGRDGAKGEKGE. 4-hydroxyproline occurs at positions 63, 74, 83, and 86. The span at 79-95 shows a compositional bias: low complexity; that stretch reads PQGTPGIPGIPGPIGQK. A coiled-coil region spans residues 113–131; it reads RATLQSELNQIKNWLIFSL. Residues 135 to 246 form the C-type lectin domain; that stretch reads VGKKAFFTNG…CSASFLTVCE (112 aa). Intrachain disulfides connect cysteine 156–cysteine 245 and cysteine 223–cysteine 237.

As to quaternary structure, oligomeric complex of 3 or more homotrimers. Interacts with MASP1 and MASP2. Interacts with MEP1A and MEP1B and may inhibit their catalytic activity. Hydroxylation on proline residues within the sequence motif, GXPG, is most likely to be 4-hydroxy as this fits the requirement for 4-hydroxylation in vertebrates.

Its subcellular location is the secreted. In terms of biological role, calcium-dependent lectin involved in innate immune defense. Binds mannose, fucose and N-acetylglucosamine on different microorganisms and activates the lectin complement pathway. Binds to late apoptotic cells, as well as to apoptotic blebs and to necrotic cells, but not to early apoptotic cells, facilitating their uptake by macrophages. The sequence is that of Mannose-binding protein C (MBL) from Bos taurus (Bovine).